A 294-amino-acid polypeptide reads, in one-letter code: uncharacterized protein (294 aa).

Catalysis depends on charge relay system residues Thr-43 and Tyr-104. Tyr-130 functions as the Proton donor in the catalytic mechanism. Lys-158 acts as the Schiff-base intermediate with substrate in catalysis.

The protein belongs to the DapA family. Homotetramer.

It is found in the cytoplasm. This is an uncharacterized protein from Pyrococcus abyssi (strain GE5 / Orsay).